A 688-amino-acid polypeptide reads, in one-letter code: Complement C1s-1 subcomponent (688 aa).

The first 15 residues, 1–15 (MWCLVLFSLLASFSA), serve as a signal peptide directing secretion. Positions 16–130 (EPTMHGEILS…TGFAAYYTAI (115 aa)) constitute a CUB 1 domain. Positions 60, 68, 113, 131, 132, and 134 each coordinate Ca(2+). A disulfide bridge links C65 with C83. Positions 131 to 172 (DINECTDFTDVPCSHFCNNFIGGYFCSCPPEYFLHDDMRNCG) constitute an EGF-like; calcium-binding domain. 3 cysteine pairs are disulfide-bonded: C135-C147, C143-C156, and C158-C171. Positions 149, 150, and 153 each coordinate Ca(2+). At N149 the chain carries (3R)-3-hydroxyasparagine. A glycan (N-linked (GlcNAc...) asparagine) is linked at N174. C175 and C202 form a disulfide bridge. Positions 175–290 (CSGDVFTALI…KGWKLRYHGD (116 aa)) constitute a CUB 2 domain. Residues E226, D236, D275, G278, and Q279 each contribute to the Ca(2+) site. The cysteines at positions 234 and 251 are disulfide-linked. Sushi domains lie at 292–356 (ISCA…KCQP) and 357–423 (VYCG…RCIP). Cystine bridges form between C294/C341, C321/C354, C359/C403, C386/C421, C425/C549, C595/C618, and C627/C659. Residues 438–680 (IFGGQPAKIE…YVDWILKTMQ (243 aa)) enclose the Peptidase S1 domain. Active-site charge relay system residues include H475 and D529. Residue S631 is the Charge relay system of the active site. N-linked (GlcNAc...) asparagine glycosylation occurs at N641.

The protein belongs to the peptidase S1 family. Core component of the complement C1 complex, a calcium-dependent complex composed of 1 molecule of the C1Q subcomplex, 2 molecules of C1R and 2 molecules of C1S. The C1Q subcomplex is composed 18 subunits: 3 chains of C1QA, C1QB, and C1QC trimerize to form 6 collagen-like triple helices connected to six globular ligand-recognition modules. Post-translationally, cleaved and activated by C1R to generate Complement C1s subcomponent heavy and light chains. In terms of processing, the iron and 2-oxoglutarate dependent 3-hydroxylation of aspartate and asparagine is (R) stereospecific within EGF domains. In terms of tissue distribution, predominantly expressed in liver.

It localises to the secreted. The protein localises to the cell surface. It catalyses the reaction Cleavage of Arg-|-Ala bond in complement component C4 to form C4a and C4b, and Lys(or Arg)-|-Lys bond in complement component C2 to form C2a and C2b: the 'classical' pathway C3 convertase.. Its activity is regulated as follows. Cleaved and activated by C1R. Immunoglobulin-binding promotes autoactivation of C1R, which results in the cleavage of the Arg-Ile bond in the catalytic domain. Inhibited by C1 inhibitor (SERPING1). Component of the complement C1 complex, a multiprotein complex that initiates the classical pathway of the complement system, a cascade of proteins that leads to phagocytosis and breakdown of pathogens and signaling that strengthens the adaptive immune system. C1S is activated following association of the C1 complex with immunoglobulins (IgG or IgM) complexed with antigens to form antigen-antibody complexes on the surface of pathogens. C1S is cleaved and activated by C1R to generate C1s subcomponent heavy and light chains. C1s subcomponent light chain then cleaves and activates C2 and C4, the next components of the classical complement pathway. Functionally, serine protease component of the complement C1 complex, which catalyzes cleavage and activation of C2 and C4, the next components of the classical complement pathway. Also cleaves IGFBP5 and thereby inhibits the trophic effects of IGF1. The polypeptide is Complement C1s-1 subcomponent (Mus musculus (Mouse)).